A 66-amino-acid polypeptide reads, in one-letter code: Conotoxin Cal5.2 (66 aa).

Residues 1 to 20 (MMYCLPVVCILLLLIPSSAT) form the signal peptide. Positions 21-51 (FVVESRLEKDQAQSFTGDAWKRVSPIHEMIQ) are excised as a propeptide. Val65 carries the valine amide modification.

The protein belongs to the conotoxin T superfamily. Contains 2 disulfide bonds that can be either 'C1-C3, C2-C4' or 'C1-C4, C2-C3', since these disulfide connectivities have been observed for conotoxins with cysteine framework V (for examples, see AC P0DQQ7 and AC P81755). In terms of tissue distribution, expressed by the venom duct.

Its subcellular location is the secreted. Its function is as follows. Probable neurotoxin with unknown target. Possibly targets ion channels. This Californiconus californicus (California cone) protein is Conotoxin Cal5.2.